Reading from the N-terminus, the 129-residue chain is Translation initiation factor 5A (129 aa).

The residue at position 36 (Lys-36) is a Hypusine.

The protein belongs to the eIF-5A family.

It localises to the cytoplasm. In terms of biological role, functions by promoting the formation of the first peptide bond. The chain is Translation initiation factor 5A (eIF5A) from Methanobrevibacter smithii (strain ATCC 35061 / DSM 861 / OCM 144 / PS).